The primary structure comprises 228 residues: L-ribulose-5-phosphate 4-epimerase UlaF (228 aa).

Residues 26–27 (GN), 43–44 (SG), and 72–73 (SS) contribute to the substrate site. D74, H93, and H95 together coordinate Zn(2+). Catalysis depends on D118, which acts as the Proton donor/acceptor. H167 is a binding site for Zn(2+). Y225 serves as the catalytic Proton donor/acceptor.

This sequence belongs to the aldolase class II family. AraD/FucA subfamily. Zn(2+) is required as a cofactor.

The enzyme catalyses L-ribulose 5-phosphate = D-xylulose 5-phosphate. The protein operates within cofactor degradation; L-ascorbate degradation; D-xylulose 5-phosphate from L-ascorbate: step 4/4. In terms of biological role, catalyzes the isomerization of L-ribulose 5-phosphate to D-xylulose 5-phosphate. Is involved in the anaerobic L-ascorbate utilization. This chain is L-ribulose-5-phosphate 4-epimerase UlaF, found in Escherichia fergusonii (strain ATCC 35469 / DSM 13698 / CCUG 18766 / IAM 14443 / JCM 21226 / LMG 7866 / NBRC 102419 / NCTC 12128 / CDC 0568-73).